We begin with the raw amino-acid sequence, 205 residues long: Small ribosomal subunit protein uS4 (205 aa).

Basic residues predominate over residues 1–12 (MSKRVQAKHKLD). The disordered stretch occupies residues 1–49 (MSKRVQAKHKLDRRMGQNIWGRPKSPVNRREYGPGQHGQRRKGKMSDFG). One can recognise an S4 RNA-binding domain in the interval 94–155 (RRLDAVVYRS…ASRQLEIVVV (62 aa)).

Belongs to the universal ribosomal protein uS4 family. Part of the 30S ribosomal subunit. Contacts protein S5. The interaction surface between S4 and S5 is involved in control of translational fidelity.

In terms of biological role, one of the primary rRNA binding proteins, it binds directly to 16S rRNA where it nucleates assembly of the body of the 30S subunit. Functionally, with S5 and S12 plays an important role in translational accuracy. The sequence is that of Small ribosomal subunit protein uS4 from Methylorubrum extorquens (strain CM4 / NCIMB 13688) (Methylobacterium extorquens).